A 1250-amino-acid chain; its full sequence is MVTRVASSERPRPLVPESIVDAPTQRLYAIGVFVALQAYKIYDLLKLETSSISDVPKSGFLVKWIIIDAIYLRLLPKFRIPWLSFQPAATLLQIAIFAAINLLLSSLSSLKWISIGSILLPYFKKKELSISEHKINPNNVIHNSSRILGQYTLQVLPEGTAKINPLHENYCLNSLRKDQYVDLAIQFNSTIPKYIQYSHVDLETKEETLVEVSGRSLRKLLSSSSKNPKEPRLQTIYLKTNKRGLYTLKHVVDKSKLDVRIFRSEAVVVSCPTATFASRQSGGRLRERCVGDTDNAELKVTGVAPLQVTYRNWDGKHFNTHIIDSTIPDDFHPPAVVLSSNPKDIVFYKGIDIQWARSSEIFVPINTLLKAPGQWIYAVTQVTDALGNSQQFPSNDQFLLRFAHGYTEADGESHSLPENVYSVFVHQRPDIQFRGCSIESPANLFPNKETSLSLYSSFSEYNSLEVGVDRYELGLDPQNITVPPLSHKTYQISPRSSANINVKKPGIYVLSSVSSQYCSGEVLEPNTCLVVTPPEAKVSVSFEEISDQCAGSIGARADLELEGTPPFTIAYRMTKDNEASRIQYVTTDRTRYQLNFTPKKAGKYRYIILGIQDANYGYRELSGSSFYKDQTVFPLADASFEERRNGDLSTVVKTSCIGDTMSLPVLLTGSAPWTLEYEIFRNNKREESHVVESKDPRYILEVPMLVHGSQYTITLVSVKDSNGCKRSLNTADTVIKVRRQRPTATFYSSDNTYTLKSVEGALMKIPLRLAGEKPWYVEYSHTSGLNKVSHHKEVLNDPNSYLTVRKSGTYTLLSVSDSSCPGTIQNVEQKYQVEWLPRPFLSIPSLESSVKGKTRYYEQNAVCAGDSSAFEVQLSGSGPFLLKHDKILVDEKSKTYPKQKSELSTVQNTVLVKADTAVPGVYHYEFTKLSDSLYSDSDAVTIVNNQSYQAVVLQRVNSLPKASFMNVEKLYTFCINTDVTQSNAQLIAIQLQGASPFSLVIGIKNELTGSVSKYTLNDIHESVYKFAFPQEQLTLGKHVVRLLQVRDANGCAASITKTQPAAKVSVVEMASLAPLGSRQYYCVGDRLSFALQGLPPFDVEYEFNGVTQHATSDSHILTRLIELPGVVAMKSISDHGSHCKSYINPPIEQIVHDIPTVRISNGKDVIENIHEGDQAEISFHFTGTPPFSFSYARRALGKKRPGKVLETHTVTGINEYEYKVLSSVEGVYTVLSVQDKYCRYPQDSTSSSNI.

Residues 1–79 (MVTRVASSER…IYLRLLPKFR (79 aa)) form a pore side region. A helical membrane pass occupies residues 80–100 (IPWLSFQPAATLLQIAIFAAI). The segment at 101 to 1250 (NLLLSSLSSL…PQDSTSSSNI (1150 aa)) is cisternal side.

As to quaternary structure, component of the nuclear pore complex (NPC). NPC constitutes the exclusive means of nucleocytoplasmic transport. NPCs allow the passive diffusion of ions and small molecules and the active, nuclear transport receptor-mediated bidirectional transport of macromolecules such as proteins, RNAs, ribonucleoparticles (RNPs), and ribosomal subunits across the nuclear envelope.

It localises to the nucleus. It is found in the nuclear pore complex. Its subcellular location is the nucleus membrane. In terms of biological role, functions as a component of the nuclear pore complex (NPC). NPC components, collectively referred to as nucleoporins (NUPs), can play the role of both NPC structural components and of docking or interaction partners for transiently associated nuclear transport factors. This Schizosaccharomyces pombe (strain 972 / ATCC 24843) (Fission yeast) protein is Nucleoporin pom152 (pom152).